Consider the following 293-residue polypeptide: Ribonuclease HIII (293 aa).

The RNase H type-2 domain occupies Leu78 to Arg293. Residues Asp84, Glu85, and Asp187 each coordinate a divalent metal cation.

The protein belongs to the RNase HII family. RnhC subfamily. Mn(2+) is required as a cofactor. Requires Mg(2+) as cofactor.

The protein resides in the cytoplasm. The enzyme catalyses Endonucleolytic cleavage to 5'-phosphomonoester.. Endonuclease that specifically degrades the RNA of RNA-DNA hybrids. This Streptococcus pneumoniae serotype 4 (strain ATCC BAA-334 / TIGR4) protein is Ribonuclease HIII (rnhC).